The sequence spans 105 residues: Urease subunit beta (105 aa).

This sequence belongs to the urease beta subunit family. In terms of assembly, heterotrimer of UreA (gamma), UreB (beta) and UreC (alpha) subunits. Three heterotrimers associate to form the active enzyme.

It is found in the cytoplasm. It catalyses the reaction urea + 2 H2O + H(+) = hydrogencarbonate + 2 NH4(+). Its pathway is nitrogen metabolism; urea degradation; CO(2) and NH(3) from urea (urease route): step 1/1. This chain is Urease subunit beta, found in Pseudomonas entomophila (strain L48).